A 445-amino-acid polypeptide reads, in one-letter code: Succinate--CoA ligase [ADP-forming] subunit beta, mitochondrial (445 aa).

A mitochondrion-targeting transit peptide spans 1 to 17 (MLSNIVKKTIQSSKNLK). The 228-residue stretch at 43–270 (QKMMKSYGIN…DNAAFRHPDI (228 aa)) folds into the ATP-grasp domain. ATP contacts are provided by residues K80 and 87-89 (GRG). Mg(2+) is bound by residues N240 and D254. Residues N305 and 362–364 (GIM) contribute to the substrate site.

It belongs to the succinate/malate CoA ligase beta subunit family. ATP-specific subunit beta subfamily. As to quaternary structure, heterodimer of an alpha and a beta subunit. The beta subunit determines specificity for ATP. Requires Mg(2+) as cofactor.

The protein localises to the mitochondrion. The catalysed reaction is succinate + ATP + CoA = succinyl-CoA + ADP + phosphate. It functions in the pathway carbohydrate metabolism; tricarboxylic acid cycle; succinate from succinyl-CoA (ligase route): step 1/1. Functionally, ATP-specific succinyl-CoA synthetase functions in the citric acid cycle (TCA), coupling the hydrolysis of succinyl-CoA to the synthesis of ATP and thus represents the only step of substrate-level phosphorylation in the TCA. The beta subunit provides nucleotide specificity of the enzyme and binds the substrate succinate, while the binding sites for coenzyme A and phosphate are found in the alpha subunit. In Dictyostelium discoideum (Social amoeba), this protein is Succinate--CoA ligase [ADP-forming] subunit beta, mitochondrial (scsC).